Reading from the N-terminus, the 657-residue chain is UvrABC system protein B (657 aa).

Residues 25–163 form the Helicase ATP-binding domain; sequence ASIKNGNKYQ…QGMVLFLEIN (139 aa). 38–45 contributes to the ATP binding site; sequence GVTGSGKT. Positions 91–114 match the Beta-hairpin motif; the sequence is YYDYYQPEAYIPRQDLFIEKDSSI. Positions 130 to 133 match the DEAD box motif; the sequence is LSFD. In terms of domain architecture, Helicase C-terminal spans 433–599; that stretch reads QVEILYDMAK…SVSRNVEESL (167 aa). Residues 622-657 form the UVR domain; that stretch reads AKIVKDLRKQMMEAADKLEFEKAAALRDEIKKMRKL.

The protein belongs to the UvrB family. Forms a heterotetramer with UvrA during the search for lesions. Interacts with UvrC in an incision complex.

Its subcellular location is the cytoplasm. Functionally, the UvrABC repair system catalyzes the recognition and processing of DNA lesions. A damage recognition complex composed of 2 UvrA and 2 UvrB subunits scans DNA for abnormalities. Upon binding of the UvrA(2)B(2) complex to a putative damaged site, the DNA wraps around one UvrB monomer. DNA wrap is dependent on ATP binding by UvrB and probably causes local melting of the DNA helix, facilitating insertion of UvrB beta-hairpin between the DNA strands. Then UvrB probes one DNA strand for the presence of a lesion. If a lesion is found the UvrA subunits dissociate and the UvrB-DNA preincision complex is formed. This complex is subsequently bound by UvrC and the second UvrB is released. If no lesion is found, the DNA wraps around the other UvrB subunit that will check the other stand for damage. The protein is UvrABC system protein B of Campylobacter hominis (strain ATCC BAA-381 / DSM 21671 / CCUG 45161 / LMG 19568 / NCTC 13146 / CH001A).